The primary structure comprises 763 residues: Disintegrin and metalloproteinase domain-containing protein 29 (763 aa).

A signal peptide spans 1-31 (MNMIEALLSMRVLFLTQVFGIFLCFPGLTKA). A propeptide spanning residues 32–200 (GHLHYHSSIE…ILKQSSFEDW (169 aa)) is cleaved from the precursor. Asn164, Asn177, and Asn223 each carry an N-linked (GlcNAc...) asparagine glycan. The Extracellular portion of the chain corresponds to 201–684 (WTHTKIVELV…KTNKKKHFFY (484 aa)). Residues 205–396 (KIVELVVVVD…NTRCLMENMY (192 aa)) form the Peptidase M12B domain. Cystine bridges form between Cys313–Cys390, Cys353–Cys375, and Cys355–Cys360. Asn374, Asn424, Asn434, Asn475, and Asn584 each carry an N-linked (GlcNAc...) asparagine glycan. In terms of domain architecture, Disintegrin spans 403–489 (RTRCGNGVVE…ECPDDAYVED (87 aa)). A disulfide bridge connects residues Cys461 and Cys481. 3 cysteine pairs are disulfide-bonded: Cys631/Cys642, Cys636/Cys648, and Cys650/Cys659. The EGF-like domain occupies 631-660 (CTPAFCNYRGICNNKHHCHCNFHWDPPNCM). The helical transmembrane segment at 685 to 705 (LLLLQLIILACLLSCLLWLLF) threads the bilayer. Over 706–763 (NIKGSKRKPQVQPTPVKTKKVSKKVPSQKPSPVPSPSLPQLRMPSRSASPTSSIKSTN) the chain is Cytoplasmic. The tract at residues 712–763 (RKPQVQPTPVKTKKVSKKVPSQKPSPVPSPSLPQLRMPSRSASPTSSIKSTN) is disordered. Residues 751-763 (RSASPTSSIKSTN) are compositionally biased toward polar residues.

Its subcellular location is the membrane. Functionally, may be involved in spermatogenesis and fertilization. Seems to be a non catalytic metalloprotease-like protein. This chain is Disintegrin and metalloproteinase domain-containing protein 29 (Adam29), found in Mus musculus (Mouse).